Here is a 217-residue protein sequence, read N- to C-terminus: Octanoyltransferase (217 aa).

Residues 30-209 (GNRPPTLLLL…AFAEVFGLRP (180 aa)) enclose the BPL/LPL catalytic domain. Residues 75–82 (RGGDVTYH), 139–141 (AIG), and 152–154 (GFA) contribute to the substrate site. Cys170 functions as the Acyl-thioester intermediate in the catalytic mechanism.

It belongs to the LipB family.

The protein localises to the cytoplasm. It catalyses the reaction octanoyl-[ACP] + L-lysyl-[protein] = N(6)-octanoyl-L-lysyl-[protein] + holo-[ACP] + H(+). Its pathway is protein modification; protein lipoylation via endogenous pathway; protein N(6)-(lipoyl)lysine from octanoyl-[acyl-carrier-protein]: step 1/2. Functionally, catalyzes the transfer of endogenously produced octanoic acid from octanoyl-acyl-carrier-protein onto the lipoyl domains of lipoate-dependent enzymes. Lipoyl-ACP can also act as a substrate although octanoyl-ACP is likely to be the physiological substrate. This Thermus thermophilus (strain ATCC 27634 / DSM 579 / HB8) protein is Octanoyltransferase.